The following is a 1088-amino-acid chain: MRPKTFPATTYSGNSRQRLQEIREGLKQPSKSSVQGLPAGPNSDTSLDAKVLGSKDATRQQQQMRATPKFGPYQKALREIRYSLLPFANESGTSAAAEVNRQMLQELVNAGCDQEMAGRALKQTGSRSIEAALEYISKMGYLDPRNEQIVRVIKQTSPGKGLMPTPVTRRPSFEGTGDSFASYHQLSGTPYEGPSFGADGPTALEEMPRPYVDYLFPGVGPHGPGHQHQHPPKGYGASVEAAGAHFPLQGAHYGRPHLLVPGEPLGYGVQRSPSFQSKTPPETGGYASLPTKGQGGPPGAGLAFPPPAAGLYVPHPHHKQAGPAAHQLHVLGSRSQVFASDSPPQSLLTPSRNSLNVDLYELGSTSVQQWPAATLARRDSLQKPGLEAPPRAHVAFRPDCPVPSRTNSFNSHQPRPGPPGKAEPSLPAPNTVTAVTAAHILHPVKSVRVLRPEPQTAVGPSHPAWVPAPAPAPAPAPAPAAEGLDAKEEHALALGGAGAFPLDVEYGGPDRRCPPPPYPKHLLLRSKSEQYDLDSLCAGMEQSLRAGPNEPEGGDKSRKSAKGDKGGKDKKQIQTSPVPVRKNSRDEEKRESRIKSYSPYAFKFFMEQHVENVIKTYQQKVNRRLQLEQEMAKAGLCEAEQEQMRKILYQKESNYNRLKRAKMDKSMFVKIKTLGIGAFGEVCLACKVDTHALYAMKTLRKKDVLNRNQVAHVKAERDILAEADNEWVVKLYYSFQDKDSLYFVMDYIPGGDMMSLLIRMEVFPEHLARFYIAELTLAIESVHKMGFIHRDIKPDNILIDLDGHIKLTDFGLCTGFRWTHNSKYYQKGSHVRQDSMEPSDLWDDVSNCRCGDRLKTLEQRARKQHQRCLAHSLVGTPNYIAPEVLLRKGYTQLCDWWSVGVILFEMLVGQPPFLAPTPTETQLKVINWENTLHIPAQVKLSPEARDLITKLCCSADHRLGRNGADDLKAHPFFSAIDFSSDIRKQPAPYVPTISHPMDTSNFDPVDEESPWNDASEGSTKAWDTLTSPNNKHPEHAFYEFTFRRFFDDNGYPFRCPKPSGAEASQAESSDLESSDLVDQTEGCQPVYV.

Residues 24 to 49 (EGLKQPSKSSVQGLPAGPNSDTSLDA) form a disordered region. Serine 83 bears the Phosphoserine; by AURKA mark. A UBA domain is found at 98–139 (EVNRQMLQELVNAGCDQEMAGRALKQTGSRSIEAALEYISKM). The interaction with ubiquitinated AMOTL2 stretch occupies residues 101-141 (RQMLQELVNAGCDQEMAGRALKQTGSRSIEAALEYISKMGY). Residues 271 to 280 (RSPSFQSKTP) are compositionally biased toward polar residues. Residues 271–323 (RSPSFQSKTPPETGGYASLPTKGQGGPPGAGLAFPPPAAGLYVPHPHHKQAGP) form a disordered region. Threonine 279 is subject to Phosphothreonine. Serine 380 carries the phosphoserine modification. 2 disordered regions span residues 383-428 (KPGL…SLPA) and 454-483 (PQTAVGPSHPAWVPAPAPAPAPAPAPAAEG). The segment covering 404-413 (SRTNSFNSHQ) has biased composition (polar residues). Over residues 466 to 478 (VPAPAPAPAPAPA) the composition is skewed to pro residues. Residues 515-518 (PPPY) carry the PPxY motif motif. Positions 543-592 (SLRAGPNEPEGGDKSRKSAKGDKGGKDKKQIQTSPVPVRKNSRDEEKRES) are disordered. Residues 553-572 (GGDKSRKSAKGDKGGKDKKQ) are compositionally biased toward basic and acidic residues. Residue serine 576 is modified to Phosphoserine. The segment covering 583 to 592 (NSRDEEKRES) has biased composition (basic and acidic residues). Positions 668–973 (FVKIKTLGIG…ADDLKAHPFF (306 aa)) constitute a Protein kinase domain. Residues 674–682 (LGIGAFGEV) and lysine 697 each bind ATP. The active-site Proton acceptor is aspartate 791. Positions 974-1052 (SAIDFSSDIR…RRFFDDNGYP (79 aa)) constitute an AGC-kinase C-terminal domain. Residues 994 to 1022 (SHPMDTSNFDPVDEESPWNDASEGSTKAW) form a disordered region. At threonine 1041 the chain carries Phosphothreonine. The interval 1056 to 1088 (PKPSGAEASQAESSDLESSDLVDQTEGCQPVYV) is disordered.

Belongs to the protein kinase superfamily. AGC Ser/Thr protein kinase family. Interacts with and is phosphorylated by AURKA. Binds to AR. Interacts with AJUBA during mitosis and this complex regulates organization of the spindle apparatus through recruitment of gamma-tubulin to the centrosome. Interacts (via PPxY motif) with YAP1 (via WW domains). Interacts with MOB1A and MOB1B. Interacts with LIMD1, WTIP and AJUBA. Interacts with SNAI1. Interacts with WWC1, WWC2 and WWC3 (via their WW domains). Interacts (via UBA domain) with ubiquitinated AMOTL2; the interaction promotes LATS2 phosphorylation of YAP1. Requires Mg(2+) as cofactor. In terms of processing, autophosphorylated and phosphorylated during M-phase and the G1/S-phase of the cell cycle. Phosphorylated and activated by STK3/MST2. Phosphorylated by MAP4Ks; in parallel to STK3/MST2 and resulting to its activation. Phosphorylation by NUAK2 may regulate its activity in phosphorylation and inactivation YAP1. Expressed at high levels in heart and skeletal muscle and at lower levels in all other tissues examined.

It is found in the cytoplasm. It localises to the cytoskeleton. The protein resides in the microtubule organizing center. Its subcellular location is the centrosome. The protein localises to the spindle pole. It is found in the nucleus. The enzyme catalyses L-seryl-[protein] + ATP = O-phospho-L-seryl-[protein] + ADP + H(+). The catalysed reaction is L-threonyl-[protein] + ATP = O-phospho-L-threonyl-[protein] + ADP + H(+). Negative regulator of YAP1 in the Hippo signaling pathway that plays a pivotal role in organ size control and tumor suppression by restricting proliferation and promoting apoptosis. The core of this pathway is composed of a kinase cascade wherein STK3/MST2 and STK4/MST1, in complex with its regulatory protein SAV1, phosphorylates and activates LATS1/2 in complex with its regulatory protein MOB1, which in turn phosphorylates and inactivates YAP1 oncoprotein and WWTR1/TAZ. Phosphorylation of YAP1 by LATS2 inhibits its translocation into the nucleus to regulate cellular genes important for cell proliferation, cell death, and cell migration. Also phosphorylates YAP1 in response to cell contact inhibition-driven WWP1 ubiquitination of AMOTL2, which results in LATS2 activation. Acts as a tumor suppressor which plays a critical role in centrosome duplication, maintenance of mitotic fidelity and genomic stability. Negatively regulates G1/S transition by down-regulating cyclin E/CDK2 kinase activity. Negative regulator of the androgen receptor. Phosphorylates SNAI1 in the nucleus leading to its nuclear retention and stabilization, which enhances its epithelial-mesenchymal transition and tumor cell invasion/migration activities. This tumor-promoting activity is independent of its effects upon YAP1 or WWTR1/TAZ. Acts as an activator of the NLRP3 inflammasome by mediating phosphorylation of 'Ser-265' of NLRP3 following NLRP3 palmitoylation, promoting NLRP3 activation by NEK7. The protein is Serine/threonine-protein kinase LATS2 of Homo sapiens (Human).